The primary structure comprises 130 residues: Small ribosomal subunit protein uS9 (130 aa).

The disordered stretch occupies residues 102-130 (GLLTRDSRMKERKKPGLKGARRAPQFSKR). Positions 111-130 (KERKKPGLKGARRAPQFSKR) are enriched in basic residues.

The protein belongs to the universal ribosomal protein uS9 family.

The protein is Small ribosomal subunit protein uS9 of Listeria monocytogenes serovar 1/2a (strain ATCC BAA-679 / EGD-e).